We begin with the raw amino-acid sequence, 263 residues long: uncharacterized protein (263 aa).

The Response regulatory domain occupies threonine 6–lysine 121. Aspartate 58 carries the post-translational modification 4-aspartylphosphate. The HTH LytTR-type domain occupies isoleucine 158–methionine 263.

This is an uncharacterized protein from Vibrio parahaemolyticus serotype O3:K6 (strain RIMD 2210633).